The primary structure comprises 254 residues: D-aminoacyl-tRNA deacylase (254 aa).

The tract at residues 61 to 82 (KPTLTVHTPGNLTDDNSHGGNP) is disordered. Residues 65–74 (TVHTPGNLTD) show a composition bias toward polar residues.

This sequence belongs to the DtdA deacylase family. In terms of assembly, monomer. Zn(2+) serves as cofactor.

The enzyme catalyses a D-aminoacyl-tRNA + H2O = a tRNA + a D-alpha-amino acid + H(+). The catalysed reaction is glycyl-tRNA(Ala) + H2O = tRNA(Ala) + glycine + H(+). In terms of biological role, D-aminoacyl-tRNA deacylase with broad substrate specificity. By recycling D-aminoacyl-tRNA to D-amino acids and free tRNA molecules, this enzyme counteracts the toxicity associated with the formation of D-aminoacyl-tRNA entities in vivo. The protein is D-aminoacyl-tRNA deacylase of Methanococcus maripaludis (strain DSM 14266 / JCM 13030 / NBRC 101832 / S2 / LL).